The primary structure comprises 186 residues: MEKKRRARINVSLEQLKSLLEKHYSHQIRKRKLEKADILELSVKYMRSLQNSLQGLWPVPRGAEQPSGFRSCLPGVSQLLRRGDEVGSGLRCPLVPESAAGSTMDSAGLGQEAPALFRPCTPAVWAPAPAAGGPRSPPPLLLLPESLPGSSASVPPPQPASSRCAESPGLGLRVWRPWGSPGDDLN.

In terms of domain architecture, bHLH spans 1-49 (MEKKRRARINVSLEQLKSLLEKHYSHQIRKRKLEKADILELSVKYMRSL). The region spanning 65–99 (QPSGFRSCLPGVSQLLRRGDEVGSGLRCPLVPESA) is the Orange domain. The segment at 128 to 186 (APAAGGPRSPPPLLLLPESLPGSSASVPPPQPASSRCAESPGLGLRVWRPWGSPGDDLN) is disordered. Residues 142-153 (LLPESLPGSSAS) are compositionally biased toward low complexity. A WRPW motif motif is present at residues 175–178 (WRPW).

Transcription repression requires formation of a complex with a corepressor protein of the Groucho/TLE family.

It localises to the nucleus. Functionally, transcriptional repressor of genes that require a bHLH protein for their transcription. This Homo sapiens (Human) protein is Transcription factor HES-3 (HES3).